We begin with the raw amino-acid sequence, 367 residues long: UDP-N-acetylenolpyruvoylglucosamine reductase (367 aa).

The FAD-binding PCMH-type domain maps to 29–205; it reads VGPVAQRVIT…LEVEFKLDAS (177 aa). The active site involves Arg-177. The Proton donor role is filled by Ser-260. The active site involves Glu-359.

Belongs to the MurB family. Requires FAD as cofactor.

The protein localises to the cytoplasm. It carries out the reaction UDP-N-acetyl-alpha-D-muramate + NADP(+) = UDP-N-acetyl-3-O-(1-carboxyvinyl)-alpha-D-glucosamine + NADPH + H(+). Its pathway is cell wall biogenesis; peptidoglycan biosynthesis. Cell wall formation. The sequence is that of UDP-N-acetylenolpyruvoylglucosamine reductase from Mycobacterium leprae (strain Br4923).